Reading from the N-terminus, the 344-residue chain is Heat-inducible transcription repressor HrcA (344 aa).

Belongs to the HrcA family.

In terms of biological role, negative regulator of class I heat shock genes (grpE-dnaK-dnaJ and groELS operons). Prevents heat-shock induction of these operons. This chain is Heat-inducible transcription repressor HrcA, found in Streptococcus pneumoniae (strain 70585).